The primary structure comprises 61 residues: Large ribosomal subunit protein uL30 (61 aa).

This sequence belongs to the universal ribosomal protein uL30 family. As to quaternary structure, part of the 50S ribosomal subunit.

The sequence is that of Large ribosomal subunit protein uL30 from Caulobacter vibrioides (strain ATCC 19089 / CIP 103742 / CB 15) (Caulobacter crescentus).